The sequence spans 286 residues: Urease accessory protein UreD (286 aa).

Belongs to the UreD family. In terms of assembly, ureD, UreF and UreG form a complex that acts as a GTP-hydrolysis-dependent molecular chaperone, activating the urease apoprotein by helping to assemble the nickel containing metallocenter of UreC. The UreE protein probably delivers the nickel.

The protein localises to the cytoplasm. Required for maturation of urease via the functional incorporation of the urease nickel metallocenter. The chain is Urease accessory protein UreD from Rhodopseudomonas palustris (strain BisA53).